We begin with the raw amino-acid sequence, 419 residues long: Gamma-glutamyl phosphate reductase (419 aa).

It belongs to the gamma-glutamyl phosphate reductase family.

The protein localises to the cytoplasm. It carries out the reaction L-glutamate 5-semialdehyde + phosphate + NADP(+) = L-glutamyl 5-phosphate + NADPH + H(+). It participates in amino-acid biosynthesis; L-proline biosynthesis; L-glutamate 5-semialdehyde from L-glutamate: step 2/2. Catalyzes the NADPH-dependent reduction of L-glutamate 5-phosphate into L-glutamate 5-semialdehyde and phosphate. The product spontaneously undergoes cyclization to form 1-pyrroline-5-carboxylate. The sequence is that of Gamma-glutamyl phosphate reductase from Azoarcus sp. (strain BH72).